Reading from the N-terminus, the 141-residue chain is MVKYPLILLLIGCAAAQEPRRDGEWPPPAILKLGKHFHDICAPKTGVTDEAIKEFSDGQIHEDEALKCYMNCLFHEFEVVDDNGDVHMEKVLNAIPGEKLRNIMMEASKGCIHPEGDTLCHKAWWFHQCWKKADPVHYFLV.

Positions 1–16 (MVKYPLILLLIGCAAA) are cleaved as a signal peptide. Cystine bridges form between Cys-41/Cys-72, Cys-68/Cys-120, and Cys-111/Cys-129.

The protein belongs to the PBP/GOBP family. Antenna. Mostly expressed in two types of sensory hairs, sensilla trichodea and small sensilla basiconica, in the ventro-lateral region of the third antennal segment (at protein level).

Its subcellular location is the secreted. This is Pheromone-binding protein-related protein 6 (Obp83b) from Drosophila melanogaster (Fruit fly).